Consider the following 244-residue polypeptide: DNA repair protein RecO (244 aa).

The protein belongs to the RecO family.

In terms of biological role, involved in DNA repair and RecF pathway recombination. The chain is DNA repair protein RecO from Polynucleobacter asymbioticus (strain DSM 18221 / CIP 109841 / QLW-P1DMWA-1) (Polynucleobacter necessarius subsp. asymbioticus).